Consider the following 125-residue polypeptide: Small ribosomal subunit protein uS12 (125 aa).

Position 89 is a 3-methylthioaspartic acid (Asp89). The tract at residues 104-125 is disordered; sequence TAGVKDRSQSRSKYGAKASKQD.

The protein belongs to the universal ribosomal protein uS12 family. In terms of assembly, part of the 30S ribosomal subunit. Contacts proteins S8 and S17. May interact with IF1 in the 30S initiation complex.

Its function is as follows. With S4 and S5 plays an important role in translational accuracy. In terms of biological role, interacts with and stabilizes bases of the 16S rRNA that are involved in tRNA selection in the A site and with the mRNA backbone. Located at the interface of the 30S and 50S subunits, it traverses the body of the 30S subunit contacting proteins on the other side and probably holding the rRNA structure together. The combined cluster of proteins S8, S12 and S17 appears to hold together the shoulder and platform of the 30S subunit. The polypeptide is Small ribosomal subunit protein uS12 (Prochlorococcus marinus (strain MIT 9303)).